The sequence spans 306 residues: Probable rRNA-processing protein EBP2 (306 aa).

M1 bears the N-acetylmethionine mark. 3 disordered regions span residues 1-20 (MDTP…LASD), 75-103 (GPVP…DDFQ), and 150-169 (IRQK…KAKQ). Position 3 is a phosphothreonine (T3). Phosphoserine is present on residues S7, S9, S11, and S13. Polar residues predominate over residues 81 to 90 (SETQPTPQNQ). Basic and acidic residues predominate over residues 91–103 (DQKKGVNPEDDFQ). K93 is covalently cross-linked (Glycyl lysine isopeptide (Lys-Gly) (interchain with G-Cter in SUMO2)). A coiled-coil region spans residues 135-171 (DYFAEMAKSDQQMQKIRQKLQTKQAAMEKSEKAKQLR). Residues K179 and K218 each participate in a glycyl lysine isopeptide (Lys-Gly) (interchain with G-Cter in SUMO2) cross-link. The segment covering 213-224 (LEGDQKPVERSA) has biased composition (basic and acidic residues). The segment at 213 to 306 (LEGDQKPVER…ARQKLKSKAR (94 aa)) is disordered. S264 and S270 each carry phosphoserine. A compositionally biased stretch (basic residues) spans 274–306 (KVAHGKGSRRPGKKGANKRPGKRARQKLKSKAR).

This sequence belongs to the EBP2 family. Interacts with WDR46.

It localises to the nucleus. The protein resides in the nucleolus. Its function is as follows. Required for the processing of the 27S pre-rRNA. The chain is Probable rRNA-processing protein EBP2 (Ebna1bp2) from Mus musculus (Mouse).